A 1314-amino-acid chain; its full sequence is AT-rich interactive domain-containing protein 4B (1314 aa).

2 disordered regions span residues 123–169 and 266–306; these read LPLT…RKQT and KTEL…EPFP. Phosphoserine is present on residues Ser-276, Ser-295, and Ser-296. Residues 277–305 show a composition bias toward acidic residues; that stretch reads EAEEEEEEEDDEKEKEDNSSEEEEEIEPF. The 93-residue stretch at 306–398 folds into the ARID domain; that stretch reads PEERENFLQQ…YLYGFEEYCR (93 aa). Glycyl lysine isopeptide (Lys-Gly) (interchain with G-Cter in SUMO2) cross-links involve residues Lys-428 and Lys-461. The span at 439 to 464 shows a compositional bias: basic and acidic residues; sequence NVEDSKNVMPKEETPAEDESERKENI. Disordered stretches follow at residues 439–577, 635–678, 709–888, 943–1215, and 1256–1290; these read NVED…KVQV, IKHR…SPEM, ASES…EEKR, KELF…RLPK, and VASI…SITA. Ser-482 carries the post-translational modification Phosphoserine. Over residues 486-511 the composition is skewed to basic and acidic residues; that stretch reads KEAHITKLEENENLEDKDGGRARTEE. Acidic residues predominate over residues 531-567; that stretch reads NKEEDEDDEEIEEEEEEDEEEDEDEDDDDNNEEEEFE. The Tudor-knot domain occupies 572–624; that stretch reads GMKVQVRYGRGKNQKMYEASIKDSDVEGGEALYLVHYCGWNVRYDEWIKADKI. A compositionally biased stretch (basic and acidic residues) spans 643–656; the sequence is NKLDKEKDRDEKYS. 4 positions are modified to phosphoserine: Ser-666, Ser-668, Ser-675, and Ser-717. Basic and acidic residues-rich tracts occupy residues 722-754 and 778-787; these read ERCT…KEEQ and SPERLRKDME. Lys-751 is covalently cross-linked (Glycyl lysine isopeptide (Lys-Gly) (interchain with G-Cter in SUMO2)). A phosphoserine mark is found at Ser-778 and Ser-790. Residues 788-800 show a composition bias toward acidic residues; it reads AISEDTDFEEEDE. Thr-793 is modified (phosphothreonine). Composition is skewed to basic and acidic residues over residues 808 to 817, 841 to 853, and 997 to 1012; these read VKKDTTDKAL, GKKE…KEPL, and KPIE…RKTE. A compositionally biased stretch (polar residues) spans 1013–1023; that stretch reads FPSSGSNSVLN. Ser-1016 is subject to Phosphoserine. Thr-1028 carries the phosphothreonine modification. Low complexity predominate over residues 1030-1051; the sequence is ESPSSVTITEASQQQSSVTVSV. Residue Ser-1031 is modified to Phosphoserine. Positions 1058 to 1067 are enriched in basic and acidic residues; that stretch reads EEVRSIKSET. Positions 1089–1103 are enriched in low complexity; the sequence is SSPAGFDASVSSSSS. The segment covering 1132-1150 has biased composition (basic residues); sequence KKQKRSHKATVVNNKKKGK. Thr-1152 carries the phosphothreonine modification. Phosphoserine occurs at positions 1154, 1155, 1157, and 1161. Residues 1164–1186 are compositionally biased toward polar residues; it reads ESVTKTQTIKSVPTGMKTHNSKS. A compositionally biased stretch (basic and acidic residues) spans 1198-1210; it reads RNGDKDPDLKEPS. Positions 1227–1272 form a coiled coil; that stretch reads ENMTSAERISILQEKLQEIRKHYLSLKSEVASIDRRRKRLKKKERE. The segment covering 1274–1290 has biased composition (low complexity); it reads AATSSSSSSPSSSSITA.

In terms of assembly, component of a Sin3A corepressor complex consisting of SIN3A, SAP130, SUDS3/SAP45, SAP180, HDAC1 and HDAC2. Interacts with ARID4A. Interacts with AR. As to expression, expressed in Sertoli cells of the testis.

The protein localises to the nucleus. Acts as a transcriptional repressor. May function in the assembly and/or enzymatic activity of the Sin3A corepressor complex or in mediating interactions between the complex and other regulatory complexes. Plays a role in the regulation of epigenetic modifications at the PWS/AS imprinting center near the SNRPN promoter, where it might function as part of a complex with RB1 and ARID4A. Involved in spermatogenesis, together with ARID4A, where it functions as a transcriptional coactivator for AR (androgen receptor) and enhances expression of genes required for sperm maturation. Regulates expression of the tight junction protein CLDN3 in the testis, which is important for integrity of the blood-testis barrier. Plays a role in myeloid homeostasis where it regulates the histone methylation state of bone marrow cells and expression of various genes involved in hematopoiesis. May function as a leukemia suppressor. In Mus musculus (Mouse), this protein is AT-rich interactive domain-containing protein 4B (Arid4b).